Consider the following 477-residue polypeptide: Myc-associated zinc finger protein (477 aa).

Disordered stretches follow at residues 59 to 78 (AQSP…APAA) and 121 to 146 (TVDT…PAAE). The span at 130-141 (PPAPPPPPPPVS) shows a compositional bias: pro residues. 4 consecutive C2H2-type zinc fingers follow at residues 190 to 212 (YICA…EAIH), 279 to 301 (HACE…KLSH), 307 to 329 (YQCP…VRSH), and 337 to 360 (YNCS…RQVH). Ser-361 bears the Phosphoserine mark. The C2H2-type 5 zinc finger occupies 366–388 (FKCEKCEAAFATKDRLRAHTVRH). The C2H2-type 6; atypical zinc-finger motif lies at 392-413 (VPCHVCGKMLSSAYISDHMKVH).

In terms of assembly, interacts with BPTF. As to quaternary structure, forms a heterodimer with MAZ isoform 2; the interaction inhibits MAZ isoform 1-mediated transcription activation. Forms a heterodimer with MAZ isoform 1; the interaction inhibits MAZ isoform 1-mediated transcription activation. As to expression, present in kidney, liver and brain. In the brain, highest levels are found in motor cortex and midfrontal cortex (at protein level). Expressed in the heart, brain, placenta, lung, liver, skeletal muscle and weakly expressed in the kidney. Expressed in the joint synovium.

The protein resides in the nucleus. Transcriptional regulator, potentially with dual roles in transcription initiation and termination. Its function is as follows. Binds DNA and functions as a transcriptional activator. Binds to two G/A-rich sites, ME1a1 and ME1a2, within the MYC promoter having greater affinity for the former. Also binds to multiple G/C-rich sites within the promoter of the Sp1 family of transcription factors. Functionally, binds DNA and functions as a transcriptional activator. Inhibits MAZ isoform 1-mediated transcription. In terms of biological role, binds DNA and functions as a transcriptional activator. The protein is Myc-associated zinc finger protein (MAZ) of Homo sapiens (Human).